A 475-amino-acid chain; its full sequence is Ribonuclease Y (475 aa).

The tract at residues 34–73 (EFERESRERRNELQRVERRLMQKEESLDKKSETLEQKDDR) is disordered. Residues 165–228 (TVTVVQLPND…EVARIALEKL (64 aa)) enclose the KH domain. The 94-residue stretch at 291-384 (VLKHAIEVSH…VTAADAISAA (94 aa)) folds into the HD domain.

This sequence belongs to the RNase Y family.

In terms of biological role, endoribonuclease that initiates mRNA decay. The polypeptide is Ribonuclease Y (Alkaliphilus metalliredigens (strain QYMF)).